Here is a 145-residue protein sequence, read N- to C-terminus: Acidic phospholipase A2 (145 aa).

Positions 1-21 (MYPAHLLVLLAVCVSLLGAAS) are cleaved as a signal peptide. Residues 22–27 (IPPLPL) constitute a propeptide that is removed on maturation. Intrachain disulfides connect Cys38–Cys98, Cys54–Cys144, Cys56–Cys72, Cys71–Cys125, Cys78–Cys118, Cys87–Cys111, and Cys105–Cys116. Ca(2+) contacts are provided by Tyr55 and Gly57. The active site involves His75. Residue Asp76 participates in Ca(2+) binding. Residue Asp119 is part of the active site.

The protein belongs to the phospholipase A2 family. Group I subfamily. D49 sub-subfamily. Ca(2+) serves as cofactor. Expressed by the venom gland.

The protein localises to the secreted. It catalyses the reaction a 1,2-diacyl-sn-glycero-3-phosphocholine + H2O = a 1-acyl-sn-glycero-3-phosphocholine + a fatty acid + H(+). Functionally, PLA2 catalyzes the calcium-dependent hydrolysis of the 2-acyl groups in 3-sn-phosphoglycerides. This is Acidic phospholipase A2 from Notechis scutatus scutatus (Mainland tiger snake).